Here is a 539-residue protein sequence, read N- to C-terminus: uncharacterized protein (539 aa).

5 helical membrane passes run 4–22 (LVEN…GLLL), 27–46 (IFGF…ALST), 56–78 (LIYV…PGFF), 90–112 (ALTL…VLNI), and 155–177 (PVVA…IAIF). RCK C-terminal domains are found at residues 187–269 (KEAE…AIGE) and 271–352 (IDGD…LLGD). The next 4 helical transmembrane spans lie at 360–382 (FNLL…EFPL), 422–444 (LALR…GAGF), 453–475 (SLTI…LFVG), and 516–538 (YTSV…LFLL).

This sequence belongs to the AAE transporter (TC 2.A.81) family.

It localises to the cell membrane. This is an uncharacterized protein from Corynebacterium glutamicum (strain ATCC 13032 / DSM 20300 / JCM 1318 / BCRC 11384 / CCUG 27702 / LMG 3730 / NBRC 12168 / NCIMB 10025 / NRRL B-2784 / 534).